We begin with the raw amino-acid sequence, 317 residues long: Protoheme IX farnesyltransferase (317 aa).

The next 9 membrane-spanning stretches (helical) occupy residues Ile-28 to Ile-48, Leu-53 to Ile-73, Leu-101 to Leu-121, Leu-122 to Leu-142, Ile-150 to Gly-170, Ile-178 to Ile-198, Ile-223 to Ala-243, Leu-246 to Leu-266, and Tyr-282 to Val-302.

This sequence belongs to the UbiA prenyltransferase family. Protoheme IX farnesyltransferase subfamily.

Its subcellular location is the cell inner membrane. It catalyses the reaction heme b + (2E,6E)-farnesyl diphosphate + H2O = Fe(II)-heme o + diphosphate. It participates in porphyrin-containing compound metabolism; heme O biosynthesis; heme O from protoheme: step 1/1. Its function is as follows. Converts heme B (protoheme IX) to heme O by substitution of the vinyl group on carbon 2 of heme B porphyrin ring with a hydroxyethyl farnesyl side group. This is Protoheme IX farnesyltransferase from Picosynechococcus sp. (strain ATCC 27264 / PCC 7002 / PR-6) (Agmenellum quadruplicatum).